The primary structure comprises 265 residues: Energy-coupling factor transporter ATP-binding protein EcfA1 (265 aa).

One can recognise an ABC transporter domain in the interval 2 to 236 (IKIKNLVFRY…KEIVELAKID (235 aa)). 36-43 (GHNGSGKS) lines the ATP pocket.

Belongs to the ABC transporter superfamily. Energy-coupling factor EcfA family. Forms a stable energy-coupling factor (ECF) transporter complex composed of 2 membrane-embedded substrate-binding proteins (S component), 2 ATP-binding proteins (A component) and 2 transmembrane proteins (T component).

It localises to the cell membrane. In terms of biological role, ATP-binding (A) component of a common energy-coupling factor (ECF) ABC-transporter complex. Unlike classic ABC transporters this ECF transporter provides the energy necessary to transport a number of different substrates. This chain is Energy-coupling factor transporter ATP-binding protein EcfA1, found in Mycoplasmopsis pulmonis (strain UAB CTIP) (Mycoplasma pulmonis).